A 463-amino-acid chain; its full sequence is Retinoic acid receptor RXR-gamma (463 aa).

The interval 1-138 is modulating; that stretch reads MYGNYSHFMK…TSPGSLVKHI (138 aa). Residues 18 to 53 are disordered; that stretch reads SPGHTGSTSMSPSAALSTGKPMDSHPSYTDTPVSAP. Positions 21–33 are enriched in polar residues; sequence HTGSTSMSPSAAL. 2 consecutive NR C4-type zinc fingers follow at residues 139 to 159 and 175 to 194; these read CAICGDRSSGKHYGVYSCEGC and CRDNKDCLIDKRQRNRCQYC. The nuclear receptor DNA-binding region spans 139–204; it reads CAICGDRSSG…RYQKCLVMGM (66 aa). The tract at residues 205–230 is hinge; the sequence is KREAVQEERQRSRERAESEAECASSG. Over residues 211-222 the composition is skewed to basic and acidic residues; sequence EERQRSRERAES. Residues 211–232 are disordered; it reads EERQRSRERAESEAECASSGHE. Positions 231 to 459 constitute an NR LBD domain; that stretch reads HEDMPVERIL…TFLMEMLETP (229 aa).

This sequence belongs to the nuclear hormone receptor family. NR2 subfamily. Homodimer. Heterodimer with a RAR molecule. Binds DNA preferentially as a RAR/RXR heterodimer. Interacts with RARA. In terms of processing, acetylated by EP300.

It is found in the nucleus. It localises to the cytoplasm. In terms of biological role, receptor for retinoic acid. Retinoic acid receptors bind as heterodimers to their target response elements in response to their ligands, all-trans or 9-cis retinoic acid, and regulate gene expression in various biological processes. The RAR/RXR heterodimers bind to the retinoic acid response elements (RARE) composed of tandem 5'-AGGTCA-3' sites known as DR1-DR5. The high affinity ligand for RXRs is 9-cis retinoic acid. The sequence is that of Retinoic acid receptor RXR-gamma (RXRG) from Pongo abelii (Sumatran orangutan).